Here is a 3419-residue protein sequence, read N- to C-terminus: Utrophin (3419 aa).

An actin-binding region spans residues 1–246; that stretch reads MAKYGHLEAS…LPDKKSIIMY (246 aa). Residue tyrosine 4 is modified to Phosphotyrosine. Serine 10 is modified (phosphoserine). 2 consecutive Calponin-homology (CH) domains span residues 31 to 135 and 150 to 255; these read DVQK…LHWQ and TNSE…EVLP. The tract at residues 268-905 is interaction with SYNM; that stretch reads TLPRKYKKEC…YQQQLENELK (638 aa). Serine 295 is modified (phosphoserine). Spectrin repeat units follow at residues 312–416, 421–525, 532–636, 690–795, 801–901, 910–1012, 1019–1121, 1128–1229, 1236–1333, 1335–1436, 1438–1540, 1547–1648, 1653–1747, 1748–1840, 1841–1958, 1969–2070, and 2077–2176; these read DSYQ…SRLH, ELQK…NRLQ, QELL…NQVT, KKFD…RKIQ, NAYF…QQLE, PAYL…RSLE, RDFK…SRLS, MNLK…HTLE, VELL…ISLE, QLQV…LFQK, ANFE…QDLE, RKLK…NTLL, QLEV…INSA, QMLI…KIKA, IPQR…SDRR, KQFH…PRLK, and SGYR…KTRT. The segment at 1336–1761 is interaction with SYNM; the sequence is LQVLRETDHM…GQDPAGTVEA (426 aa). Serine 1998 carries the phosphoserine modification. The residue at position 2201 (serine 2201) is a Phosphoserine. Spectrin repeat units lie at residues 2216–2319, 2336–2426, 2433–2542, 2549–2674, and 2681–2783; these read ADLD…QQLE, EELM…SALE, QTSR…AHLE, NRLL…KQVG, and RDLQ…KQLQ. Positions 2616-2640 are disordered; sequence DQPIEAPEEPRRNPQSKTELTPEER. Positions 2785–3152 are interaction with SYNM; that stretch reads AHRDFGPSSQ…TVLEGDNLET (368 aa). In terms of domain architecture, WW spans 2799–2832; that stretch reads TSVQLPWQRSISHNKVPYYINHQTQTTCWDHPKM. The ZZ-type; degenerate zinc-finger motif lies at 3052-3108; the sequence is KHQAKCNICKECPIVGFRYRSLKHFNYDVCQSCFFSGRTAKGHKLHYPMVEYCIPTT. Zn(2+) is bound by residues cysteine 3057, cysteine 3060, cysteine 3081, and cysteine 3084. Disordered regions lie at residues 3277-3296 and 3344-3395; these read RRGL…YHTS and DSDS…TDLT. The residue at position 3284 (serine 3284) is a Phosphoserine.

As to quaternary structure, homodimer. Interacts with the syntrophins SNTA1; SNTB1 and SNTB2. Interacts with SYNM. Interacts (via its WWW and ZZ domains) with DAG1 (via the PPXY motif of betaDAG1); the interaction is inhibited by the tyrosine phosphorylation of the PPXY motif of DAG1. Interacts with DTNB. Interacts with PGM5.

The protein localises to the postsynaptic cell membrane. It localises to the cytoplasm. The protein resides in the cytoskeleton. Its function is as follows. May play a role in anchoring the cytoskeleton to the plasma membrane. This chain is Utrophin, found in Rattus norvegicus (Rat).